The primary structure comprises 286 residues: Aminoglycoside N(3)-acetyltransferase III (286 aa).

This sequence belongs to the antibiotic N-acetyltransferase family.

The catalysed reaction is a 2-deoxystreptamine antibiotic + acetyl-CoA = an N(3)-acetyl-2-deoxystreptamine antibiotic + CoA + H(+). In terms of biological role, resistance to antibiotics containing the 2-deoxy-streptamine ring including gentamicin, kanamycin, tobramycin, neomycin and apramycin. The protein is Aminoglycoside N(3)-acetyltransferase III (aacC3) of Salmonella sp.